We begin with the raw amino-acid sequence, 949 residues long: RNA polymerase-associated protein RapA (949 aa).

The Helicase ATP-binding domain maps to Glu164–Asn332. Asp177 to Thr184 contacts ATP. The short motif at Asp278–His281 is the DEAH box element. One can recognise a Helicase C-terminal domain in the interval Arg474–His628.

The protein belongs to the SNF2/RAD54 helicase family. RapA subfamily. As to quaternary structure, interacts with the RNAP. Has a higher affinity for the core RNAP than for the holoenzyme. Its ATPase activity is stimulated by binding to RNAP.

Functionally, transcription regulator that activates transcription by stimulating RNA polymerase (RNAP) recycling in case of stress conditions such as supercoiled DNA or high salt concentrations. Probably acts by releasing the RNAP, when it is trapped or immobilized on tightly supercoiled DNA. Does not activate transcription on linear DNA. Probably not involved in DNA repair. This chain is RNA polymerase-associated protein RapA, found in Stutzerimonas stutzeri (strain A1501) (Pseudomonas stutzeri).